The following is a 326-amino-acid chain: MGIQFQEGKQFDVIALGRACIDLNAAEYNRPMEETRSFTKYVGGSPANIAIGSAKLGLKVGFVGKIPDDQHGRFISSYMREAGVDTSQLVIDREGHKAGLTFTEILSPEECSILMYREKAADLYLSPDEIDAGYVRSAKVLLISGTALAQSPSREAALKAVSLAKAAGTKVVFELDYRPYTWSSREETSVYYTLLAGMAHIVIGTREEYDIMEGASASGNEQTAKMLFAKEPELVVIKHGVDGSYAYLPSGETFRAGVYKTNVLKTFGAGDSYASAFLYGLLRGYDIDQALRFGSASASIVVSKHSSSEAMPTLSEIKALVEEQHV.

Belongs to the carbohydrate kinase PfkB family.

It catalyses the reaction 5-dehydro-2-deoxy-D-gluconate + ATP = 6-phospho-5-dehydro-2-deoxy-D-gluconate + ADP + H(+). It participates in polyol metabolism; myo-inositol degradation into acetyl-CoA; acetyl-CoA from myo-inositol: step 5/7. Functionally, catalyzes the phosphorylation of 5-dehydro-2-deoxy-D-gluconate (2-deoxy-5-keto-D-gluconate or DKG) to 6-phospho-5-dehydro-2-deoxy-D-gluconate (DKGP). This chain is 5-dehydro-2-deoxygluconokinase, found in Shouchella clausii (strain KSM-K16) (Alkalihalobacillus clausii).